We begin with the raw amino-acid sequence, 491 residues long: F-box/LRR-repeat protein 7 (491 aa).

The disordered stretch occupies residues methionine 1 to serine 79. Low complexity predominate over residues glycine 10–serine 26. Residues threonine 27–serine 55 are compositionally biased toward polar residues. An F-box domain is found at glutamine 111–isoleucine 157. LRR repeat units lie at residues leucine 170–glycine 195, cysteine 196–glycine 221, cysteine 222–glycine 247, cysteine 253–aspartate 281, cysteine 282–arginine 307, cysteine 308–aspartate 333, cysteine 334–histidine 359, cysteine 360–glycine 385, cysteine 386–lysine 411, cysteine 412–serine 437, and cysteine 438–aspartate 463.

The protein belongs to the FBXL7 family. As to quaternary structure, part of the SCF (SKP1-CUL1-F-box) E3 ubiquitin-protein ligase complex SCF(FBXL7) composed of CUL1, SKP1, RBX1 and FBXL7. Interacts with AURKA; interaction takes place during mitosis but not in interphase. Interacts with BIRC5; this interaction allows BIRC5 to be polyubiquitinated by the SCF(FBXL7) E3 ubiquitin-protein ligase complex.

Its subcellular location is the cytoplasm. The protein resides in the cytoskeleton. The protein localises to the microtubule organizing center. It is found in the centrosome. Its pathway is protein modification; protein ubiquitination. Functionally, substrate recognition component of a SCF (SKP1-CUL1-F-box protein) E3 ubiquitin-protein ligase complex. During mitosis, it mediates the ubiquitination and subsequent proteasomal degradation of AURKA, causing mitotic arrest. It also regulates mitochondrial function by mediating the ubiquitination and proteasomal degradation of the apoptosis inhibitor BIRC5. The chain is F-box/LRR-repeat protein 7 (FBXL7) from Homo sapiens (Human).